We begin with the raw amino-acid sequence, 976 residues long: Ephrin type-A receptor 1 (976 aa).

A signal peptide spans 1–25 (MERRWPLGLGLVLLLCAPLPPGARA). Residues 26 to 547 (KEVTLMDTSK…PVSRGLTGGE (522 aa)) lie on the Extracellular side of the membrane. Residues 27 to 209 (EVTLMDTSKA…FYQRCPETLN (183 aa)) enclose the Eph LBD domain. 2 Fibronectin type-III domains span residues 332–445 (PPSA…MGHA) and 447–538 (SLSG…TSPP). N-linked (GlcNAc...) asparagine glycosylation is present at asparagine 414. A helical membrane pass occupies residues 548 to 568 (IVAVIFGLLLGAALLLGILVF). Topologically, residues 569–976 (RSRRAQRQRQ…ILCSIQGFKD (408 aa)) are cytoplasmic. Residues tyrosine 599 and tyrosine 605 each carry the phosphotyrosine; by autocatalysis modification. The Protein kinase domain occupies 624 to 884 (LMVDTVIGEG…KLQAHLEQLL (261 aa)). Residues 630 to 638 (IGEGEFGEV) and lysine 656 each bind ATP. Aspartate 749 serves as the catalytic Proton acceptor. Residue tyrosine 781 is modified to Phosphotyrosine; by autocatalysis. Phosphoserine is present on residues serine 906 and serine 910. Residues 913–976 (IPYRTVSEWL…ILCSIQGFKD (64 aa)) enclose the SAM domain. Tyrosine 930 bears the Phosphotyrosine; by autocatalysis mark. The short motif at 974–976 (FKD) is the PDZ-binding element.

This sequence belongs to the protein kinase superfamily. Tyr protein kinase family. Ephrin receptor subfamily. Homodimer. Forms a signaling complex with LCK; PTK2B/PYK2 and PI3-kinase upon activation by EFNA1; regulates T-lymphocytes migration. Interacts (via SAM domain) with ILK (via ANK repeats); stimulated by EFNA1 but independent of the kinase activity of EPHA1. Interacts (kinase activity-dependent) with PTK2/FAK1. Phosphorylated. Autophosphorylation is stimulated by its ligand EFNA1. Post-translationally, ubiquitinated. In terms of tissue distribution, overexpressed in several carcinomas.

The protein localises to the cell membrane. It catalyses the reaction L-tyrosyl-[protein] + ATP = O-phospho-L-tyrosyl-[protein] + ADP + H(+). Its function is as follows. Receptor tyrosine kinase which binds promiscuously membrane-bound ephrin-A family ligands residing on adjacent cells, leading to contact-dependent bidirectional signaling into neighboring cells. The signaling pathway downstream of the receptor is referred to as forward signaling while the signaling pathway downstream of the ephrin ligand is referred to as reverse signaling. Binds with a low affinity EFNA3 and EFNA4 and with a high affinity to EFNA1 which most probably constitutes its cognate/functional ligand. Upon activation by EFNA1 induces cell attachment to the extracellular matrix inhibiting cell spreading and motility through regulation of ILK and downstream RHOA and RAC. Also plays a role in angiogenesis and regulates cell proliferation. May play a role in apoptosis. In Homo sapiens (Human), this protein is Ephrin type-A receptor 1 (EPHA1).